The primary structure comprises 422 residues: Tyrosine--tRNA ligase (422 aa).

Tyr-35 serves as a coordination point for L-tyrosine. The 'HIGH' region signature appears at 40–49 (PTAPSLHVGH). L-tyrosine-binding residues include Tyr-170 and Gln-174. A 'KMSKS' region motif is present at residues 231-235 (KFGKT). Lys-234 serves as a coordination point for ATP. Residues 353–419 (APVVDLFAEV…GKKNLAAVEI (67 aa)) enclose the S4 RNA-binding domain.

The protein belongs to the class-I aminoacyl-tRNA synthetase family. TyrS type 1 subfamily. In terms of assembly, homodimer.

The protein localises to the cytoplasm. It carries out the reaction tRNA(Tyr) + L-tyrosine + ATP = L-tyrosyl-tRNA(Tyr) + AMP + diphosphate + H(+). Its function is as follows. Catalyzes the attachment of tyrosine to tRNA(Tyr) in a two-step reaction: tyrosine is first activated by ATP to form Tyr-AMP and then transferred to the acceptor end of tRNA(Tyr). The protein is Tyrosine--tRNA ligase of Streptomyces coelicolor (strain ATCC BAA-471 / A3(2) / M145).